Reading from the N-terminus, the 357-residue chain is Fructose-1,6-bisphosphatase class 1 3 (357 aa).

Residues E94, D116, L118, and D119 each coordinate Mg(2+). Substrate-binding positions include 119–122 (DGSS) and N211. Residue E283 coordinates Mg(2+).

The protein belongs to the FBPase class 1 family. In terms of assembly, homotetramer. Mg(2+) serves as cofactor.

It localises to the cytoplasm. The catalysed reaction is beta-D-fructose 1,6-bisphosphate + H2O = beta-D-fructose 6-phosphate + phosphate. Its pathway is carbohydrate biosynthesis; Calvin cycle. The polypeptide is Fructose-1,6-bisphosphatase class 1 3 (Methylibium petroleiphilum (strain ATCC BAA-1232 / LMG 22953 / PM1)).